Reading from the N-terminus, the 34-residue chain is Delta-theraphotoxin-Hm1b (34 aa).

3 disulfide bridges follow: cysteine 2-cysteine 16, cysteine 9-cysteine 21, and cysteine 15-cysteine 28. At phenylalanine 34 the chain carries Phenylalanine amide.

The protein belongs to the neurotoxin 10 (Hwtx-1) family. 09 (HaTx) subfamily. As to expression, expressed by the venom gland.

Its subcellular location is the secreted. In terms of biological role, gating-modifier toxin that potently and selectively acts on Nav1.1/SCN1A and Nav1.3/SCN3A. It enhances hNav1.1/SCN1A currents and delays fast inactivation of the channel (EC(50)=11.6 nM), leading to a sustained current. Similar effects are observed at Nav1.3/SCN3A (EC(50)=11.8 nM), but with less sustained currents. When tested on Nav1.2/SCN2A, the native toxin decreases the peak current by 50% at saturating concentration, whereas the recombinant toxin only shows a weak decrease of peak current. The native toxin specifically activates the voltage-gated sodium channel Nav1.1/SCN1A in somatosensory neurons to elicit acute pain and mechanical allodynia. When tested on Nav1.1/SCN1A, the toxin induces a hyperpolarising shift of the voltage-dependence of steady-state activation, and induces a depolarizing shift in the voltage dependence of inactivation. In addition, it does not modify the recovery from fast inactivation in Nav1.1/SCN1A. The toxin hydrophobic face probably interacts with the domain IV voltage-sensor of Nav1.1/SCN1A and Nav1.3/SCN3A and may trap the voltage-sensing S4 helix in a partially activated state. In vivo, intracerebroventricular injection into mice elicits convulsions, spasms, tremors and rapid death. When injected into mouse hindpaw, the toxin elicits an immediate and robust response to pain. However, intraplantar injection of toxin does not cause neurogenic inflammation or alter sensitivity to heat, indicative of a modality-specific effect on mechanosensitive neurons. This Heteroscodra maculata (Togo starburst tarantula) protein is Delta-theraphotoxin-Hm1b.